We begin with the raw amino-acid sequence, 495 residues long: uncharacterized protein (495 aa).

The segment covering 305-317 (DYNNNNNENYSGS) has biased composition (low complexity). Positions 305-404 (DYNNNNNENY…LDEEDNRKNK (100 aa)) are disordered. Residues 335 to 347 (YDNDENNDDENND) show a composition bias toward acidic residues. Residues 348–363 (ENNNNNNNNNNNNNNN) are compositionally biased toward low complexity. Residues 386 to 398 (SDDDEADNELDEE) show a composition bias toward acidic residues.

This is an uncharacterized protein from Dictyostelium discoideum (Social amoeba).